We begin with the raw amino-acid sequence, 345 residues long: NADH-quinone oxidoreductase subunit 8 (345 aa).

8 consecutive transmembrane segments (helical) span residues 15–35, 82–102, 115–135, 161–181, 190–210, 240–262, 278–298, and 309–329; these read MLLQ…FMVY, FVYF…FVVI, VGIL…IMGG, LGLI…TAIV, LLNW…VSAL, YLLF…SLLF, WWMV…KAIV, and IGWK…AILA.

It belongs to the complex I subunit 1 family. As to quaternary structure, NDH-1 is composed of at least 14 different subunits, Nqo1 to Nqo14. The complex has a L-shaped structure, with the hydrophobic arm (subunits Nqo7, Nqo8, Nqo10 to Nqo14) embedded in the inner membrane and the hydrophilic peripheral arm (subunits Nqo1 to Nqo6, Nqo9) protruding into the bacterial cytoplasm. The hydrophilic domain contains all the redox centers.

Its subcellular location is the cell inner membrane. The catalysed reaction is a quinone + NADH + 5 H(+)(in) = a quinol + NAD(+) + 4 H(+)(out). Functionally, NDH-1 shuttles electrons from NADH, via FMN and iron-sulfur (Fe-S) centers, to quinones in the respiratory chain. The immediate electron acceptor for the enzyme in this species is believed to be ubiquinone. Couples the redox reaction to proton translocation (for every two electrons transferred, four hydrogen ions are translocated across the cytoplasmic membrane), and thus conserves the redox energy in a proton gradient. The protein is NADH-quinone oxidoreductase subunit 8 of Paracoccus denitrificans.